A 440-amino-acid polypeptide reads, in one-letter code: Adenylyltransferase and sulfurtransferase UBA4 (440 aa).

Methionine 1 carries the N-acetylmethionine modification. ATP contacts are provided by residues glycine 77, aspartate 98, 105-109, lysine 122, and 166-167; these read SNLHR and DS. Cysteine 208 and cysteine 211 together coordinate Zn(2+). Cysteine 225 functions as the Glycyl thioester intermediate; for adenylyltransferase activity in the catalytic mechanism. Zn(2+) is bound by residues cysteine 286 and cysteine 289. Serine 326 carries the post-translational modification Phosphoserine. Residues 339–438 enclose the Rhodanese domain; sequence FLAKHIFLDV…YIDDIDQTIP (100 aa). The Cysteine persulfide intermediate; for sulfurtransferase activity role is filled by cysteine 397.

The protein in the N-terminal section; belongs to the HesA/MoeB/ThiF family. UBA4 subfamily. The cofactor is Zn(2+).

Its subcellular location is the cytoplasm. The protein localises to the cytosol. The protein operates within tRNA modification; 5-methoxycarbonylmethyl-2-thiouridine-tRNA biosynthesis. Its function is as follows. Plays a central role in 2-thiolation of mcm(5)S(2)U at tRNA wobble positions of cytosolic tRNA(Lys), tRNA(Glu) and tRNA(Gln). Acts by mediating the C-terminal thiocarboxylation of sulfur carrier URM1. Its N-terminus first activates URM1 as acyl-adenylate (-COAMP), then the persulfide sulfur on the catalytic cysteine is transferred to URM1 to form thiocarboxylation (-COSH) of its C-terminus. The reaction probably involves hydrogen sulfide that is generated from the persulfide intermediate and that acts as a nucleophile towards URM1. Subsequently, a transient disulfide bond is formed. Does not use thiosulfate as sulfur donor; NFS1 probably acting as a sulfur donor for thiocarboxylation reactions. Prior mcm(5) tRNA modification by the elongator complex is required for 2-thiolation. May also be involved in protein urmylation. This is Adenylyltransferase and sulfurtransferase UBA4 from Saccharomyces cerevisiae (strain RM11-1a) (Baker's yeast).